We begin with the raw amino-acid sequence, 335 residues long: NADH-quinone oxidoreductase subunit H (335 aa).

8 consecutive transmembrane segments (helical) span residues Val-11–Leu-31, Val-81–Ile-101, Ile-114–Gly-134, Val-154–Phe-174, Leu-187–Val-207, Phe-238–Phe-258, Gln-270–Leu-290, and Phe-309–Thr-329.

This sequence belongs to the complex I subunit 1 family. As to quaternary structure, NDH-1 is composed of 13 different subunits. Subunits NuoA, H, J, K, L, M, N constitute the membrane sector of the complex.

It is found in the cell inner membrane. It catalyses the reaction a quinone + NADH + 5 H(+)(in) = a quinol + NAD(+) + 4 H(+)(out). In terms of biological role, NDH-1 shuttles electrons from NADH, via FMN and iron-sulfur (Fe-S) centers, to quinones in the respiratory chain. The immediate electron acceptor for the enzyme in this species is believed to be ubiquinone. Couples the redox reaction to proton translocation (for every two electrons transferred, four hydrogen ions are translocated across the cytoplasmic membrane), and thus conserves the redox energy in a proton gradient. This subunit may bind ubiquinone. This chain is NADH-quinone oxidoreductase subunit H, found in Pseudomonas fluorescens (strain SBW25).